Consider the following 138-residue polypeptide: Large ribosomal subunit protein uL16 (138 aa).

The segment covering 1 to 15 (MLSPKKVKYRKKQRG) has biased composition (basic residues). A disordered region spans residues 1–21 (MLSPKKVKYRKKQRGRLSGEA).

It belongs to the universal ribosomal protein uL16 family. As to quaternary structure, part of the 50S ribosomal subunit.

In terms of biological role, binds 23S rRNA and is also seen to make contacts with the A and possibly P site tRNAs. The polypeptide is Large ribosomal subunit protein uL16 (Borreliella burgdorferi (strain ATCC 35210 / DSM 4680 / CIP 102532 / B31) (Borrelia burgdorferi)).